A 348-amino-acid chain; its full sequence is uncharacterized protein (348 aa).

Residues Lys41 and Tyr170 each contribute to the NADP(+) site. Phosphoserine is present on Ser339.

Belongs to the NAD(P)-dependent epimerase/dehydratase family. Dihydroflavonol-4-reductase subfamily.

This is an uncharacterized protein from Saccharomyces cerevisiae (strain ATCC 204508 / S288c) (Baker's yeast).